Consider the following 138-residue polypeptide: Large ribosomal subunit protein bL17 (138 aa).

Belongs to the bacterial ribosomal protein bL17 family. In terms of assembly, part of the 50S ribosomal subunit. Contacts protein L32.

This is Large ribosomal subunit protein bL17 from Granulibacter bethesdensis (strain ATCC BAA-1260 / CGDNIH1).